We begin with the raw amino-acid sequence, 132 residues long: Small ribosomal subunit protein uS8 (132 aa).

This sequence belongs to the universal ribosomal protein uS8 family. In terms of assembly, part of the 30S ribosomal subunit. Contacts proteins S5 and S12.

One of the primary rRNA binding proteins, it binds directly to 16S rRNA central domain where it helps coordinate assembly of the platform of the 30S subunit. This Kocuria rhizophila (strain ATCC 9341 / DSM 348 / NBRC 103217 / DC2201) protein is Small ribosomal subunit protein uS8.